The following is a 160-amino-acid chain: Putative pre-16S rRNA nuclease (160 aa).

The protein belongs to the YqgF nuclease family.

It localises to the cytoplasm. In terms of biological role, could be a nuclease involved in processing of the 5'-end of pre-16S rRNA. In Rhodopseudomonas palustris (strain ATCC BAA-98 / CGA009), this protein is Putative pre-16S rRNA nuclease.